A 207-amino-acid chain; its full sequence is Gap junction epsilon-1 protein (207 aa).

The Cytoplasmic portion of the chain corresponds to 1 to 22; sequence MSLNYIKNFYEGCLRPPTVIGQ. A helical membrane pass occupies residues 23–43; it reads FHTLFFGSVRTFFLGVLGFAV. Residues 44–74 are Extracellular-facing; that stretch reads YGNEALHFSCDPDKRELNLYCYNQFRPITPQ. 2 cysteine pairs are disulfide-bonded: cysteine 53-cysteine 161 and cysteine 64-cysteine 147. Residues 75 to 95 traverse the membrane as a helical segment; the sequence is VFWALQLVTVLVPGAVFHLYA. The Cytoplasmic segment spans residues 96-111; it reads ACKNIDQEEILHRPMS. A helical transmembrane segment spans residues 112–132; sequence TVFYIISVLLRIILEVLAFWL. Residues 133–175 are Extracellular-facing; it reads QSHLFGFLVDPIFMCDVTGLGKILNVSKCMVPEHFEKTIFLSA. The helical transmembrane segment at 176-196 threads the bilayer; it reads MYTFTIITILLCIAEIFEILF. Over 197–207 the chain is Cytoplasmic; the sequence is RRLGYLNQPMT.

Belongs to the connexin family. Beta-type (group I) subfamily. In terms of assembly, a connexon is composed of a hexamer of connexins.

Its subcellular location is the cell membrane. Its function is as follows. Has significant hemichannel activity. However, has only low-efficiency gap junction activity and probably does not function as a gap junction channel in vivo. In Danio rerio (Zebrafish), this protein is Gap junction epsilon-1 protein.